Consider the following 297-residue polypeptide: Heterogeneous nuclear ribonucleoprotein D-like (297 aa).

Residues 1–21 (MTGFGATPDFNEGSKINASKN) form a disordered region. 2 consecutive RRM domains span residues 26-108 (GKMF…KGKE) and 111-190 (KKVF…QPKE). A disordered region spans residues 192-224 (YRQQQQKQQKGGRGAATGRGGARGRGRGQGWNQ). Residues 202 to 222 (GGRGAATGRGGARGRGRGQGW) show a composition bias toward gly residues.

It is found in the nucleus. The protein localises to the cytoplasm. Acts as a transcriptional regulator. Binds DNA and RNA. The chain is Heterogeneous nuclear ribonucleoprotein D-like (hnrnpdl) from Xenopus tropicalis (Western clawed frog).